Consider the following 525-residue polypeptide: GMP synthase [glutamine-hydrolyzing] (525 aa).

Residues 8–207 (KILILDFGSQ…VMDICGCDNK (200 aa)) form the Glutamine amidotransferase type-1 domain. Cys-85 (nucleophile) is an active-site residue. Catalysis depends on residues His-181 and Glu-183. Residues 208–400 (WQPASIIEDA…LGLPYDMLYR (193 aa)) form the GMPS ATP-PPase domain. Residue 235–241 (SGGVDSS) coordinates ATP.

In terms of assembly, homodimer.

It catalyses the reaction XMP + L-glutamine + ATP + H2O = GMP + L-glutamate + AMP + diphosphate + 2 H(+). The protein operates within purine metabolism; GMP biosynthesis; GMP from XMP (L-Gln route): step 1/1. Its function is as follows. Catalyzes the synthesis of GMP from XMP. This chain is GMP synthase [glutamine-hydrolyzing], found in Shewanella amazonensis (strain ATCC BAA-1098 / SB2B).